The primary structure comprises 101 residues: Chaperone modulatory protein CbpM (101 aa).

This sequence belongs to the CbpM family.

Its function is as follows. Interacts with CbpA and inhibits both the DnaJ-like co-chaperone activity and the DNA binding activity of CbpA. Together with CbpA, modulates the activity of the DnaK chaperone system. Does not inhibit the co-chaperone activity of DnaJ. This chain is Chaperone modulatory protein CbpM, found in Pseudomonas putida (strain ATCC 700007 / DSM 6899 / JCM 31910 / BCRC 17059 / LMG 24140 / F1).